The following is a 273-amino-acid chain: Undecaprenyl-diphosphatase (273 aa).

A run of 6 helical transmembrane segments spans residues 43 to 63, 82 to 102, 109 to 129, 185 to 205, 214 to 234, and 249 to 269; these read IGNVFEVVIQLGAILAVCWEY, KFVLNLLIAFLPAAIVGVLLI, LFNPVAVACALVVGGLVILWA, TEFSFFLAIPIMFAATAYDVL, ADLPTFGTGFLFAFLSAFVAV, and FAWYRIVFGLIILGSWWLGWI.

Belongs to the UppP family.

It localises to the cell inner membrane. It catalyses the reaction di-trans,octa-cis-undecaprenyl diphosphate + H2O = di-trans,octa-cis-undecaprenyl phosphate + phosphate + H(+). Its function is as follows. Catalyzes the dephosphorylation of undecaprenyl diphosphate (UPP). Confers resistance to bacitracin. The chain is Undecaprenyl-diphosphatase from Laribacter hongkongensis (strain HLHK9).